The following is a 169-amino-acid chain: Ureidoglycolate lyase (169 aa).

It belongs to the ureidoglycolate lyase family. As to quaternary structure, homodimer. Requires Ni(2+) as cofactor.

It carries out the reaction (S)-ureidoglycolate = urea + glyoxylate. It functions in the pathway nitrogen metabolism; (S)-allantoin degradation. In terms of biological role, catalyzes the catabolism of the allantoin degradation intermediate (S)-ureidoglycolate, generating urea and glyoxylate. Involved in the utilization of allantoin as nitrogen source. In Brucella abortus biovar 1 (strain 9-941), this protein is Ureidoglycolate lyase.